The chain runs to 455 residues: E3 ubiquitin-protein ligase IPI1 (455 aa).

The segment at 1–42 (MGAEEEEEPASAVGREGGGGGGGARAAGAGAGGDTADDDDSG) is disordered. Gly residues predominate over residues 15–33 (REGGGGGGGARAAGAGAGG). An RING-type; atypical zinc finger spans residues 51–97 (CSICLDAVVAGGGDRSTARLQCGHEFHLDCIGSAFNAKGVMQCPNCR). 2 disordered regions span residues 286 to 311 (LDSD…SRIP) and 426 to 455 (QWIG…IPRM). A compositionally biased stretch (pro residues) spans 433–442 (SPPPPPPPPA).

Interacts with SPL14/IPA1.

The protein resides in the nucleus. The enzyme catalyses S-ubiquitinyl-[E2 ubiquitin-conjugating enzyme]-L-cysteine + [acceptor protein]-L-lysine = [E2 ubiquitin-conjugating enzyme]-L-cysteine + N(6)-ubiquitinyl-[acceptor protein]-L-lysine.. It functions in the pathway protein modification; protein ubiquitination. Its function is as follows. Functions as an E3 ligase that promotes polyubiquitination of SPL14/IPA1 for subsequent proteasomal degradation. Regulates plant architecture by modulating SPL14/IPA1 abundance. Promotes the degradation of SPL14/IPA1 in panicles, while it stabilizes SPL14/IPA1 in shoot apices. Ubiquitinates the SPL14/IPA1-mediated complex with 'Lys-48'-linked polyubiquitin in panicles and 'Lys-63'-linked polyubiquitin chains in the shoot apex. The polypeptide is E3 ubiquitin-protein ligase IPI1 (Oryza sativa subsp. japonica (Rice)).